The primary structure comprises 739 residues: Ent-kaurene synthase-like 3 (739 aa).

5 residues coordinate Mg(2+): aspartate 475, aspartate 479, asparagine 619, threonine 623, and glutamate 627. Residues 475 to 479 (DDFFD) carry the DDXXD motif motif.

This sequence belongs to the terpene synthase family. Requires Mg(2+) as cofactor. Expressed in roots and stems.

The sequence is that of Ent-kaurene synthase-like 3 (KSL3) from Oryza sativa subsp. japonica (Rice).